A 289-amino-acid chain; its full sequence is Signal peptidase I (289 aa).

The Cytoplasmic segment spans residues methionine 1–serine 43. A helical transmembrane segment spans residues phenylalanine 44–valine 64. At proline 65–aspartate 289 the chain is on the periplasmic side. Residues serine 68 and lysine 131 contribute to the active site.

This sequence belongs to the peptidase S26 family.

The protein localises to the cell inner membrane. It carries out the reaction Cleavage of hydrophobic, N-terminal signal or leader sequences from secreted and periplasmic proteins.. The sequence is that of Signal peptidase I (lepB) from Rickettsia bellii (strain OSU 85-389).